A 416-amino-acid polypeptide reads, in one-letter code: Multifunctional CCA protein (416 aa).

ATP is bound by residues Gly-8 and Arg-11. CTP contacts are provided by Gly-8 and Arg-11. Mg(2+) is bound by residues Asp-21 and Asp-23. The ATP site is built by Arg-91, Arg-137, and Arg-140. CTP is bound by residues Arg-91, Arg-137, and Arg-140. Residues 228–329 (TGVHTLMVLA…VKIFDKADFW (102 aa)) enclose the HD domain.

Belongs to the tRNA nucleotidyltransferase/poly(A) polymerase family. Bacterial CCA-adding enzyme type 1 subfamily. Monomer. Can also form homodimers and oligomers. Requires Mg(2+) as cofactor. Ni(2+) is required as a cofactor.

The catalysed reaction is a tRNA precursor + 2 CTP + ATP = a tRNA with a 3' CCA end + 3 diphosphate. The enzyme catalyses a tRNA with a 3' CCA end + 2 CTP + ATP = a tRNA with a 3' CCACCA end + 3 diphosphate. Its function is as follows. Catalyzes the addition and repair of the essential 3'-terminal CCA sequence in tRNAs without using a nucleic acid template. Adds these three nucleotides in the order of C, C, and A to the tRNA nucleotide-73, using CTP and ATP as substrates and producing inorganic pyrophosphate. tRNA 3'-terminal CCA addition is required both for tRNA processing and repair. Also involved in tRNA surveillance by mediating tandem CCA addition to generate a CCACCA at the 3' terminus of unstable tRNAs. While stable tRNAs receive only 3'-terminal CCA, unstable tRNAs are marked with CCACCA and rapidly degraded. This Shewanella baltica (strain OS195) protein is Multifunctional CCA protein.